The chain runs to 379 residues: Chaperone protein DnaJ (379 aa).

The J domain maps to 5–69 (DYYEVLGISK…NKRASYDQFG (65 aa)). The CR-type zinc-finger motif lies at 136-218 (GTTKEISIRK…CHGKGTENKT (83 aa)). Positions 149, 152, 166, 169, 192, 195, 206, and 209 each coordinate Zn(2+). CXXCXGXG motif repeat units follow at residues 149–156 (CETCHGDG), 166–173 (CSYCNGAG), 192–199 (CPKCNGSG), and 206–213 (CPTCHGKG).

It belongs to the DnaJ family. As to quaternary structure, homodimer. Zn(2+) serves as cofactor.

Its subcellular location is the cytoplasm. Participates actively in the response to hyperosmotic and heat shock by preventing the aggregation of stress-denatured proteins and by disaggregating proteins, also in an autonomous, DnaK-independent fashion. Unfolded proteins bind initially to DnaJ; upon interaction with the DnaJ-bound protein, DnaK hydrolyzes its bound ATP, resulting in the formation of a stable complex. GrpE releases ADP from DnaK; ATP binding to DnaK triggers the release of the substrate protein, thus completing the reaction cycle. Several rounds of ATP-dependent interactions between DnaJ, DnaK and GrpE are required for fully efficient folding. Also involved, together with DnaK and GrpE, in the DNA replication of plasmids through activation of initiation proteins. This chain is Chaperone protein DnaJ, found in Staphylococcus aureus (strain bovine RF122 / ET3-1).